A 180-amino-acid polypeptide reads, in one-letter code: Major urinary protein 2 (180 aa).

Positions 1 to 18 (MKMLLLLCLGLTLVCVHA) are cleaved as a signal peptide. Cysteine 82 and cysteine 175 are oxidised to a cystine.

Belongs to the calycin superfamily. Lipocalin family. Abundant in the urine of adult male mice but absent from that of females.

It localises to the secreted. In terms of biological role, binds pheromones that are released from drying urine of males. These pheromones affect the sexual behavior of females. The protein is Major urinary protein 2 (Mup2) of Mus musculus (Mouse).